A 473-amino-acid polypeptide reads, in one-letter code: tRNA-2-methylthio-N(6)-dimethylallyladenosine synthase (473 aa).

The MTTase N-terminal domain maps to 3–120; the sequence is MKLHVKTWGC…LPEMIKEVQE (118 aa). The [4Fe-4S] cluster site is built by Cys12, Cys49, Cys83, Cys157, Cys161, and Cys164. Residues 143 to 375 enclose the Radical SAM core domain; the sequence is KADGATAFVS…QDRIQQQSQG (233 aa). Residues 378-441 enclose the TRAM domain; the sequence is RKMVGSVQRI…TNSIRGKFIR (64 aa).

Belongs to the methylthiotransferase family. MiaB subfamily. As to quaternary structure, monomer. Requires [4Fe-4S] cluster as cofactor.

The protein resides in the cytoplasm. It carries out the reaction N(6)-dimethylallyladenosine(37) in tRNA + (sulfur carrier)-SH + AH2 + 2 S-adenosyl-L-methionine = 2-methylsulfanyl-N(6)-dimethylallyladenosine(37) in tRNA + (sulfur carrier)-H + 5'-deoxyadenosine + L-methionine + A + S-adenosyl-L-homocysteine + 2 H(+). Its function is as follows. Catalyzes the methylthiolation of N6-(dimethylallyl)adenosine (i(6)A), leading to the formation of 2-methylthio-N6-(dimethylallyl)adenosine (ms(2)i(6)A) at position 37 in tRNAs that read codons beginning with uridine. The polypeptide is tRNA-2-methylthio-N(6)-dimethylallyladenosine synthase (Psychromonas ingrahamii (strain DSM 17664 / CCUG 51855 / 37)).